Reading from the N-terminus, the 240-residue chain is Large ribosomal subunit protein uL3 (240 aa).

Disordered regions lie at residues 139 to 164 and 215 to 240; these read VSHR…KMPG and DAPK…QEGV. The residue at position 151 (Q151) is an N5-methylglutamine. Over residues 225–240 the composition is skewed to low complexity; it reads ADGGEQAAPAAEQEGV.

This sequence belongs to the universal ribosomal protein uL3 family. Part of the 50S ribosomal subunit. Forms a cluster with proteins L14 and L19. In terms of processing, methylated by PrmB.

Its function is as follows. One of the primary rRNA binding proteins, it binds directly near the 3'-end of the 23S rRNA, where it nucleates assembly of the 50S subunit. This chain is Large ribosomal subunit protein uL3, found in Rhodopseudomonas palustris (strain BisA53).